The sequence spans 301 residues: G-protein coupled receptor homolog U51 (301 aa).

Residues 1–15 (MEKETKSLAWPATAE) are Extracellular-facing. A helical transmembrane segment spans residues 16-36 (FYGWVFIFSSIQLCTMVLLTV). The Cytoplasmic portion of the chain corresponds to 37 to 48 (RFNSFKVGREYA). Residues 49 to 69 (VFTFAGMSFNCFLLPIKMGLL) form a helical membrane-spanning segment. Residues 70–82 (SGHWSLPRDFCAI) lie on the Extracellular side of the membrane. A helical transmembrane segment spans residues 83-103 (LLYIDDFSIYFSSWSLVFMAI). At 104-122 (ERINHFCYSTPLLNENSKA) the chain is on the cytoplasmic side. Residues 123–143 (LAKVCFPIVWIISGVQALQML) traverse the membrane as a helical segment. The Extracellular portion of the chain corresponds to 144–168 (NNYKATALQNETPQCFLAFLRSGYD). The chain crosses the membrane as a helical span at residues 169-189 (MWLMLVYSVMIPVMLVFIYIY). The Cytoplasmic segment spans residues 190–199 (SKNFMLLKDE). A helical transmembrane segment spans residues 200–220 (LSTVTTYLCIYLLLGTIAHLP). Topologically, residues 221–238 (KAGLSEIESDKIFYGLRD) are extracellular. Residues 239–259 (IFMALPVLKVYYIPVMAYCMA) traverse the membrane as a helical segment. Over 260-301 (CDDHTVPVRLCSIWLVNLCKKCFSCTRREKESDLEVGIKMLK) the chain is Cytoplasmic.

The protein belongs to the G-protein coupled receptor 1 family.

It is found in the host cell membrane. The sequence is that of G-protein coupled receptor homolog U51 (U51) from Homo sapiens (Human).